The sequence spans 325 residues: LIM and senescent cell antigen-like-containing domain protein 1 (325 aa).

Ala-2 bears the N-acetylalanine mark. LIM zinc-binding domains lie at 10–62, 71–121, 135–184, 193–243, and 252–303; these read CERC…CEHD, CHQC…CRPC, CQKC…CLPC, CGAC…CETH, and CFHC…CKKC.

As to quaternary structure, component of the heterotrimeric IPP (ILK-PINCH-PARVIN) complex composed of ILK, LIMS1/PINCH and PARVA; the complex binds to F-actin via the C-terminal tail of LIMS1 and the N-terminal region of PARVA, promoting F-actin filament bundling. Formation of the IPP complex is dependent on protein kinase C and precedes integrin-mediated cell adhesion and spreading. Competes with LIMS2 for interaction with ILK. Interacts (via LIM zinc-binding 5) with TGFB1I1. Interacts with SH3/SH2 adapter NCK2, thereby linking the complex to cell surface receptors. In terms of tissue distribution, expressed in most tissues except in the brain.

It is found in the cell junction. Its subcellular location is the focal adhesion. The protein resides in the cell membrane. Its function is as follows. Within the IPP (ILK-PINCH-PARVIN) complex, binds to F-actin, promoting F-actin bundling, a process required to generate force for actin cytoskeleton reorganization and subsequent dynamic cell adhesion events such as cell spreading and migration. In Homo sapiens (Human), this protein is LIM and senescent cell antigen-like-containing domain protein 1 (LIMS1).